A 237-amino-acid chain; its full sequence is Phosphoribosylaminoimidazole-succinocarboxamide synthase (237 aa).

This sequence belongs to the SAICAR synthetase family.

The enzyme catalyses 5-amino-1-(5-phospho-D-ribosyl)imidazole-4-carboxylate + L-aspartate + ATP = (2S)-2-[5-amino-1-(5-phospho-beta-D-ribosyl)imidazole-4-carboxamido]succinate + ADP + phosphate + 2 H(+). It participates in purine metabolism; IMP biosynthesis via de novo pathway; 5-amino-1-(5-phospho-D-ribosyl)imidazole-4-carboxamide from 5-amino-1-(5-phospho-D-ribosyl)imidazole-4-carboxylate: step 1/2. The sequence is that of Phosphoribosylaminoimidazole-succinocarboxamide synthase from Erwinia tasmaniensis (strain DSM 17950 / CFBP 7177 / CIP 109463 / NCPPB 4357 / Et1/99).